The sequence spans 181 residues: Adenine phosphoribosyltransferase (181 aa).

It belongs to the purine/pyrimidine phosphoribosyltransferase family. In terms of assembly, homodimer.

Its subcellular location is the cytoplasm. The enzyme catalyses AMP + diphosphate = 5-phospho-alpha-D-ribose 1-diphosphate + adenine. The protein operates within purine metabolism; AMP biosynthesis via salvage pathway; AMP from adenine: step 1/1. Catalyzes a salvage reaction resulting in the formation of AMP, that is energically less costly than de novo synthesis. In Vibrio campbellii (strain ATCC BAA-1116), this protein is Adenine phosphoribosyltransferase.